A 239-amino-acid polypeptide reads, in one-letter code: Ribonuclease PH (239 aa).

Phosphate is bound by residues Arg-86 and 124–126 (GTR).

The protein belongs to the RNase PH family. In terms of assembly, homohexameric ring arranged as a trimer of dimers.

It catalyses the reaction tRNA(n+1) + phosphate = tRNA(n) + a ribonucleoside 5'-diphosphate. Phosphorolytic 3'-5' exoribonuclease that plays an important role in tRNA 3'-end maturation. Removes nucleotide residues following the 3'-CCA terminus of tRNAs; can also add nucleotides to the ends of RNA molecules by using nucleoside diphosphates as substrates, but this may not be physiologically important. Probably plays a role in initiation of 16S rRNA degradation (leading to ribosome degradation) during starvation. This chain is Ribonuclease PH, found in Allorhizobium ampelinum (strain ATCC BAA-846 / DSM 112012 / S4) (Agrobacterium vitis (strain S4)).